The chain runs to 199 residues: Peptidyl-tRNA hydrolase (199 aa).

A tRNA-binding site is contributed by Y15. H20 acts as the Proton acceptor in catalysis. TRNA contacts are provided by Y66, N68, and N114.

The protein belongs to the PTH family. Monomer.

Its subcellular location is the cytoplasm. It catalyses the reaction an N-acyl-L-alpha-aminoacyl-tRNA + H2O = an N-acyl-L-amino acid + a tRNA + H(+). In terms of biological role, hydrolyzes ribosome-free peptidyl-tRNAs (with 1 or more amino acids incorporated), which drop off the ribosome during protein synthesis, or as a result of ribosome stalling. Its function is as follows. Catalyzes the release of premature peptidyl moieties from peptidyl-tRNA molecules trapped in stalled 50S ribosomal subunits, and thus maintains levels of free tRNAs and 50S ribosomes. In Burkholderia ambifaria (strain MC40-6), this protein is Peptidyl-tRNA hydrolase.